We begin with the raw amino-acid sequence, 109 residues long: Ribonuclease (109 aa).

The active-site Proton acceptor is E72. H101 (proton donor) is an active-site residue.

The protein belongs to the ribonuclease N1/T1 family.

The protein resides in the secreted. Functionally, hydrolyzes phosphodiester bonds in RNA, poly- and oligoribonucleotides resulting in 3'-nucleoside monophosphates via 2',3'-cyclophosphate intermediates. The protein is Ribonuclease of Heyndrickxia coagulans (Weizmannia coagulans).